The sequence spans 91 residues: Molybdopterin synthase sulfur carrier subunit (91 aa).

Position 91 is a 1-thioglycine; alternate (G91). G91 carries the glycyl adenylate; alternate modification.

This sequence belongs to the MoaD family. MOCS2A subfamily. Heterotetramer; composed of 2 small (MOCS2A) and 2 large (MOCS2B) subunits. C-terminal thiocarboxylation occurs in 2 steps, it is first acyl-adenylated (-COAMP) via the hesA/moeB/thiF part of uba4, then thiocarboxylated (-COSH) via the rhodanese domain of uba4.

Its subcellular location is the cytoplasm. Its pathway is cofactor biosynthesis; molybdopterin biosynthesis. Functionally, acts as a sulfur carrier required for molybdopterin biosynthesis. Component of the molybdopterin synthase complex that catalyzes the conversion of precursor Z into molybdopterin by mediating the incorporation of 2 sulfur atoms into precursor Z to generate a dithiolene group. In the complex, serves as sulfur donor by being thiocarboxylated (-COSH) at its C-terminus by uba4. After interaction with MOCS2B, the sulfur is then transferred to precursor Z to form molybdopterin. The protein is Molybdopterin synthase sulfur carrier subunit of Emericella nidulans (strain FGSC A4 / ATCC 38163 / CBS 112.46 / NRRL 194 / M139) (Aspergillus nidulans).